The chain runs to 811 residues: Lysine-specific histone demethylase 1 homolog 3 (811 aa).

The span at 1–10 shows a compositional bias: pro residues; that stretch reads MSDQPPPYTP. Positions 1–79 are disordered; the sequence is MSDQPPPYTP…PSAQPPPRAS (79 aa). Basic residues predominate over residues 44–55; it reads NKRKRTGFRRKL. Low complexity predominate over residues 56–71; sequence PSGSPAAPVAVAASPS. Residues 88-189 enclose the SWIRM domain; it reads NREPTAEAVT…FGVAPAIKER (102 aa). Positions 227, 229, 235, and 609 each coordinate FAD. The disordered stretch occupies residues 790-811; that stretch reads RNSSRTKTRPSKLKIGIPKSKS.

This sequence belongs to the flavin monoamine oxidase family. The cofactor is FAD.

Probable histone demethylase. This Oryza sativa subsp. indica (Rice) protein is Lysine-specific histone demethylase 1 homolog 3.